We begin with the raw amino-acid sequence, 671 residues long: UvrABC system protein B (671 aa).

The region spanning 25–412 (EGIDAGLAHQ…AGRIVEQVVR (388 aa)) is the Helicase ATP-binding domain. 38 to 45 (GVTGSGKT) contacts ATP. The short motif at 91–114 (YYDYYQPEAYVPSSDTFIEKDASI) is the Beta-hairpin element. The 154-residue stretch at 429–582 (QVDDLLSEIH…QIAFNLEHGI (154 aa)) folds into the Helicase C-terminal domain. Positions 601–624 (PGSRSKKRKGMAKAAEENARYENE) are disordered. Positions 614 to 624 (AAEENARYENE) are enriched in basic and acidic residues. Residues 632–667 (NKRIRQLEEKMYQLARDLEFEAAAQMRDEIGKLRER) enclose the UVR domain.

This sequence belongs to the UvrB family. In terms of assembly, forms a heterotetramer with UvrA during the search for lesions. Interacts with UvrC in an incision complex.

It is found in the cytoplasm. The UvrABC repair system catalyzes the recognition and processing of DNA lesions. A damage recognition complex composed of 2 UvrA and 2 UvrB subunits scans DNA for abnormalities. Upon binding of the UvrA(2)B(2) complex to a putative damaged site, the DNA wraps around one UvrB monomer. DNA wrap is dependent on ATP binding by UvrB and probably causes local melting of the DNA helix, facilitating insertion of UvrB beta-hairpin between the DNA strands. Then UvrB probes one DNA strand for the presence of a lesion. If a lesion is found the UvrA subunits dissociate and the UvrB-DNA preincision complex is formed. This complex is subsequently bound by UvrC and the second UvrB is released. If no lesion is found, the DNA wraps around the other UvrB subunit that will check the other stand for damage. This Pseudomonas syringae pv. syringae (strain B728a) protein is UvrABC system protein B.